Reading from the N-terminus, the 450-residue chain is NAD-specific glutamate dehydrogenase (450 aa).

Positions 90, 111, and 114 each coordinate substrate. Lysine 126 serves as the catalytic Proton donor. Glycine 165 serves as a coordination point for substrate. 2 residues coordinate NAD(+): threonine 210 and asparagine 241. Position 381 (serine 381) interacts with substrate.

This sequence belongs to the Glu/Leu/Phe/Val dehydrogenases family. As to quaternary structure, homohexamer.

It carries out the reaction L-glutamate + NAD(+) + H2O = 2-oxoglutarate + NH4(+) + NADH + H(+). It functions in the pathway amino-acid degradation; L-glutamate degradation via hydroxyglutarate pathway; crotonoyl-CoA from L-glutamate: step 1/5. The polypeptide is NAD-specific glutamate dehydrogenase (gdh) (Clostridium symbiosum (Bacteroides symbiosus)).